We begin with the raw amino-acid sequence, 234 residues long: Segregation and condensation protein A (234 aa).

This sequence belongs to the ScpA family. As to quaternary structure, component of a cohesin-like complex composed of ScpA, ScpB and the Smc homodimer, in which ScpA and ScpB bind to the head domain of Smc. The presence of the three proteins is required for the association of the complex with DNA.

The protein localises to the cytoplasm. Participates in chromosomal partition during cell division. May act via the formation of a condensin-like complex containing Smc and ScpB that pull DNA away from mid-cell into both cell halves. The sequence is that of Segregation and condensation protein A from Streptococcus pyogenes serotype M6 (strain ATCC BAA-946 / MGAS10394).